The following is a 174-amino-acid chain: MKKQQRLVMRTAILLVLLAAIGYTIYTNFFTEKTAVAVGSTAPDFVLTDLKGHEHRLSDYRGKGVFLNFWGTWCKPCEREMPYMNELYPIYKKQGVEILAVNVGEPKLSVEKFAERFGLTFPIVIDRQDQVLNAYNVGPLPTTFLIDKNGEVKQIITGTMTKEDIERHLESIKP.

A helical; Signal-anchor for type II membrane protein membrane pass occupies residues 11-30 (TAILLVLLAAIGYTIYTNFF). One can recognise a Thioredoxin domain in the interval 36–174 (VAVGSTAPDF…IERHLESIKP (139 aa)). Residues C74 and C77 are joined by a disulfide bond.

The protein belongs to the thioredoxin family. ResA subfamily.

The protein resides in the cell membrane. It functions in the pathway protein modification; cytochrome c assembly. Thiol-disulfide oxidoreductase which is required in disulfide reduction during c-type cytochrome synthesis. May accept reducing equivalents from CcdA, leading to breakage of disulfide bonds in apocytochrome c; following this reduction heme can be covalently attached. The chain is Thiol-disulfide oxidoreductase ResA from Geobacillus kaustophilus (strain HTA426).